A 162-amino-acid chain; its full sequence is Caveolin-2 (162 aa).

Topologically, residues methionine 1 to lysine 86 are cytoplasmic. Residue tyrosine 19 is modified to Phosphotyrosine; by SRC. Phosphoserine occurs at positions 20 and 23. Tyrosine 27 bears the Phosphotyrosine; by SRC mark. A Phosphoserine modification is found at serine 36. An intramembrane region (helical) is located at residues phenylalanine 87–leucine 107. The Cytoplasmic segment spans residues serine 108–aspartate 162.

It belongs to the caveolin family. In terms of assembly, monomer or homodimer. Interacts with CAV1; the interaction forms a stable heterooligomeric complex that is required for targeting to lipid rafts and for caveolae formation. Tyrosine phosphorylated forms do not form heterooligomers with the Tyr-19-phosphorylated form existing as a monomer or dimer, and the Tyr-27-form as a monomer only. Interacts (tyrosine phosphorylated form) with the SH2 domain-containing proteins, RASA1, NCK1 and SRC. Interacts (tyrosine phosphorylated form) with INSR, the interaction (Tyr-27-phosphorylated form) is increased on insulin stimulation. Interacts (Tyr-19 phosphorylated form) with MAPK1 (phosphorylated form); the interaction, promoted by insulin, leads to nuclear location and MAPK1 activation. Interacts with STAT3; the interaction is increased on insulin-induced tyrosine phosphorylation leading to STAT activation. Phosphorylated on serine and tyrosine residues. CAV1 promotes phosphorylation on Ser-23 which then targets the complex to the plasma membrane, lipid rafts and caveolae. Phosphorylation on Ser-36 appears to modulate mitosis in endothelial cells. Phosphorylation on both Tyr-19 and Tyr-27 is required for insulin-induced 'Ser-727' phosphorylation of STAT3 and its activation. Phosphorylation on Tyr-19 is required for insulin-induced phosphorylation of MAPK1 and DNA binding of STAT3. Tyrosine phosphorylation is induced by both EGF and insulin (By. similarity).

It is found in the nucleus. It localises to the cytoplasm. Its subcellular location is the golgi apparatus membrane. The protein resides in the cell membrane. The protein localises to the membrane. It is found in the caveola. May act as a scaffolding protein within caveolar membranes. Interacts directly with G-protein alpha subunits and can functionally regulate their activity. Acts as an accessory protein in conjunction with CAV1 in targeting to lipid rafts and driving caveolae formation. The Ser-36 phosphorylated form has a role in modulating mitosis in endothelial cells. Positive regulator of cellular mitogenesis of the MAPK signaling pathway. Required for the insulin-stimulated nuclear translocation and activation of MAPK1 and STAT3, and the subsequent regulation of cell cycle progression. In Gorilla gorilla gorilla (Western lowland gorilla), this protein is Caveolin-2 (CAV2).